Here is a 35-residue protein sequence, read N- to C-terminus: Hemocyanin A chain (35 aa).

Belongs to the tyrosinase family. Hemocyanin subfamily. In terms of tissue distribution, hemolymph.

The protein resides in the secreted. It is found in the extracellular space. Its function is as follows. Hemocyanins are copper-containing oxygen carriers occurring freely dissolved in the hemolymph of many mollusks and arthropods. This chain is Hemocyanin A chain, found in Cherax destructor (Common yabby crayfish).